A 148-amino-acid polypeptide reads, in one-letter code: Deoxyuridine 5'-triphosphate nucleotidohydrolase (148 aa).

Residues 67 to 69, asparagine 80, 84 to 86, and methionine 94 each bind substrate; these read RSG and LID.

This sequence belongs to the dUTPase family. The cofactor is Mg(2+).

The enzyme catalyses dUTP + H2O = dUMP + diphosphate + H(+). The protein operates within pyrimidine metabolism; dUMP biosynthesis; dUMP from dCTP (dUTP route): step 2/2. Functionally, this enzyme is involved in nucleotide metabolism: it produces dUMP, the immediate precursor of thymidine nucleotides and it decreases the intracellular concentration of dUTP so that uracil cannot be incorporated into DNA. The polypeptide is Deoxyuridine 5'-triphosphate nucleotidohydrolase (Francisella philomiragia subsp. philomiragia (strain ATCC 25017 / CCUG 19701 / FSC 153 / O#319-036)).